The sequence spans 198 residues: Nucleoside triphosphate pyrophosphatase (198 aa).

D72 acts as the Proton acceptor in catalysis.

The protein belongs to the Maf family. The cofactor is a divalent metal cation.

It localises to the cytoplasm. The catalysed reaction is a ribonucleoside 5'-triphosphate + H2O = a ribonucleoside 5'-phosphate + diphosphate + H(+). It catalyses the reaction a 2'-deoxyribonucleoside 5'-triphosphate + H2O = a 2'-deoxyribonucleoside 5'-phosphate + diphosphate + H(+). Nucleoside triphosphate pyrophosphatase. May have a dual role in cell division arrest and in preventing the incorporation of modified nucleotides into cellular nucleic acids. The chain is Nucleoside triphosphate pyrophosphatase from Acinetobacter baylyi (strain ATCC 33305 / BD413 / ADP1).